Here is a 379-residue protein sequence, read N- to C-terminus: Alcohol dehydrogenase class-3 (379 aa).

At A2 the chain carries N-acetylalanine. C47 serves as a coordination point for Zn(2+). H48 is an NAD(+) binding site. An alcohol is bound by residues T49 and H69. Zn(2+)-binding residues include H69, E70, C99, C102, C105, C113, and C177. Residues 202-207 (GLGTVG), D226, K231, I272, 295-297 (VGV), 320-322 (TAF), and R372 contribute to the NAD(+) site.

It belongs to the zinc-containing alcohol dehydrogenase family. Class-III subfamily. In terms of assembly, homodimer. It depends on Zn(2+) as a cofactor. Ubiquitous.

The protein localises to the cytoplasm. It catalyses the reaction a primary alcohol + NAD(+) = an aldehyde + NADH + H(+). The enzyme catalyses a secondary alcohol + NAD(+) = a ketone + NADH + H(+). It carries out the reaction S-(hydroxymethyl)glutathione + NADP(+) = S-formylglutathione + NADPH + H(+). The catalysed reaction is S-(hydroxymethyl)glutathione + NAD(+) = S-formylglutathione + NADH + H(+). It catalyses the reaction S-nitrosoglutathione + NADH + H(+) = S-(hydroxysulfenamide)glutathione + NAD(+). With respect to regulation, repressed by thiol-modifying agents N-ethylmaleimide (NEM) and 5,5-dithio-bis-(2-nitrobenzoic acid) (DTNB), as well as by methyl methanethiosulfonate (MMTS) in a dose-dependent manner. Inhibited by hydrogen peroxide H(2)O(2). Its function is as follows. Alcohol dehydrogenase catalyzing the reduction of nitrosoglutathione. Can also use long-chain alcohols including cinnamyl alcohol and geraniol, and, to a lower extent, octanol. Plays a central role in formaldehyde detoxification. Not able to use ethanol (EtOH) as substrate. The protein is Alcohol dehydrogenase class-3 of Arabidopsis thaliana (Mouse-ear cress).